The following is a 274-amino-acid chain: Large ribosomal subunit protein uL2 (274 aa).

The interval V223–K274 is disordered.

Belongs to the universal ribosomal protein uL2 family. In terms of assembly, part of the 50S ribosomal subunit. Forms a bridge to the 30S subunit in the 70S ribosome.

One of the primary rRNA binding proteins. Required for association of the 30S and 50S subunits to form the 70S ribosome, for tRNA binding and peptide bond formation. It has been suggested to have peptidyltransferase activity; this is somewhat controversial. Makes several contacts with the 16S rRNA in the 70S ribosome. The protein is Large ribosomal subunit protein uL2 of Shewanella putrefaciens (strain CN-32 / ATCC BAA-453).